The primary structure comprises 984 residues: Shutoff protein (984 aa).

The tract at residues 131-231 is disordered; that stretch reads GVAAESDPSD…DLERDALVAP (101 aa). Positions 137–147 are enriched in acidic residues; it reads DPSDDEPDPEP. Residues 148–159 are compositionally biased toward basic and acidic residues; it reads EYDHREADHDSD. The span at 176 to 186 shows a compositional bias: acidic residues; sequence VDEEPQDDSPS. Positions 190 to 202 are enriched in polar residues; that stretch reads TASTVIEEAQTSA. Basic and acidic residues predominate over residues 205–216; the sequence is DSHDDDTHRDDG. The tract at residues 411–476 is binding to host EIF4G; that stretch reads LMETLLQPFA…AVRYTATLEL (66 aa). The RRM domain occupies 479 to 597; it reads RVFREPSMVK…RLYSLPNPTA (119 aa). Disordered regions lie at residues 810–853 and 876–984; these read GVYK…GNRA and KVGP…RQEE. At Tyr-812 the chain carries Phosphotyrosine; by host. The span at 913 to 923 shows a compositional bias: basic residues; that stretch reads AGGRRFGRRNT. The segment covering 945 to 958 has biased composition (low complexity); the sequence is RGQQGEHPTTSPSA.

This sequence belongs to the adenoviridae shutoff protein family. In terms of assembly, monomer. Interacts with hexon protein; this interaction allows chaperoning and trimerization of hexon proteins. Interacts (via N-terminus) with host initiation factor EIF4G (via C-terminus). Interacts (via RRM domain) with viral mRNAs that contain the tripartite leader; this interaction allows ribosome shunting and expression of viral late mRNAs. Post-translationally, might be cleaved by the viral protease. Phosphorylated. Tyrosine phosphorylation enhances preferential binding to tripartite leader mRNAs and allows ribosome shunting. In terms of processing, methylated. Asymmetric dimethylation by host PRMT1 of the Arg/Gly-rich region may regulate shutoff protein binding to hexon and promote the capsid assembly in the nucleus.

The protein resides in the host cytoplasm. Protein that inhibits host translation while promoting late viral translation by ribosome shunting. Blocks host cap-dependent translation by binding to eIF4G, displacing MKNK1 from cap initiation complexes and preventing EIF4E phosphorylation. Binds to the tripartite leader sequence of viral late mRNAs and recruits host eIF4G, PABPC1/poly-A binding protein and 40S ribosomes subunits on viral mRNAs, allowing ribosome shunting and efficient translation of late viral mRNAs even though conventional translation via ribosome scanning from the cap has been shut off in the host cell. During assembly, acts as a chaperone protein that helps hexon proteins assembly into trimers. In Galliformes (FAdV-1), this protein is Shutoff protein.